The chain runs to 398 residues: Cysteine desulfurase 2 (398 aa).

Residues 71-72, N150, Q178, and 198-200 contribute to the pyridoxal 5'-phosphate site; these read GT and SGH. N6-(pyridoxal phosphate)lysine is present on K201. Residue T236 participates in pyridoxal 5'-phosphate binding. Residue C323 is the Cysteine persulfide intermediate of the active site. C323 contributes to the [2Fe-2S] cluster binding site.

Belongs to the class-V pyridoxal-phosphate-dependent aminotransferase family. NifS/IscS subfamily. In terms of assembly, homodimer. The cofactor is pyridoxal 5'-phosphate.

It carries out the reaction (sulfur carrier)-H + L-cysteine = (sulfur carrier)-SH + L-alanine. Functionally, catalyzes the removal of elemental sulfur atoms from cysteine to produce alanine. Seems to participate in the biosynthesis of the nitrogenase metalloclusters by providing the inorganic sulfur required for the Fe-S core formation. This Trichormus variabilis (strain ATCC 29413 / PCC 7937) (Anabaena variabilis) protein is Cysteine desulfurase 2.